The following is a 232-amino-acid chain: Myb-related protein 308 (232 aa).

HTH myb-type domains lie at 9 to 61 (KAHT…INYL) and 62 to 116 (RPDL…RRKL). 2 consecutive DNA-binding regions (H-T-H motif) follow at residues 37–61 (WRSL…INYL) and 89–112 (WSLI…NTHI).

In terms of tissue distribution, expressed in roots, stems, leaves, seed pods and flowers.

It localises to the nucleus. Its function is as follows. Transcription factor. This Antirrhinum majus (Garden snapdragon) protein is Myb-related protein 308.